Reading from the N-terminus, the 93-residue chain is Alpha-defensin 23 (93 aa).

An N-terminal signal peptide occupies residues 1–19; that stretch reads MKTLVLLSALILLAFQVQA. Residues 20-58 constitute a propeptide that is removed on maturation; sequence DPIQNTDEETKTEEQPGKEDQAVSVSFGDPEGSSLQEES. The disordered stretch occupies residues 24-54; sequence NTDEETKTEEQPGKEDQAVSVSFGDPEGSSL. A compositionally biased stretch (basic and acidic residues) spans 27-40; that stretch reads EETKTEEQPGKEDQ. 3 disulfide bridges follow: C64–C92, C66–C81, and C71–C91.

The protein belongs to the alpha-defensin family.

The protein resides in the secreted. May have microbicidal activities. The protein is Alpha-defensin 23 (Defa23) of Mus musculus (Mouse).